We begin with the raw amino-acid sequence, 257 residues long: Diacetyl reductase [(S)-acetoin forming] (257 aa).

6-30 (IITGAAGGLGKGIAERLANDGFNIV) is an NAD(+) binding site. Ser-139 contributes to the substrate binding site. Residue Tyr-152 is the Proton acceptor of the active site. Lys-156 is a catalytic residue.

The protein belongs to the short-chain dehydrogenases/reductases (SDR) family.

It carries out the reaction (S)-acetoin + NAD(+) = diacetyl + NADH + H(+). In terms of biological role, catalyzes the irreversible reduction of 2,3-butanediol to (S)-acetoin in the presence of NADH. The polypeptide is Diacetyl reductase [(S)-acetoin forming] (butA) (Staphylococcus epidermidis (strain ATCC 12228 / FDA PCI 1200)).